A 438-amino-acid chain; its full sequence is Na(+)/H(+) antiporter NhaA 2 (438 aa).

11 helical membrane-spanning segments follow: residues 21 to 41 (SGGI…NSPW), 66 to 86 (LHHW…GLEL), 102 to 122 (MLPI…FHFI), 130 to 150 (KGWG…LALL), 160 to 180 (IFLT…IALF), 183 to 203 (GELA…LIAG), 206 to 226 (LGVQ…VVLL), 308 to 328 (WVIF…VLQL), 341 to 361 (LGVA…FSWI), 376 to 396 (WMDV…SLFI), and 410 to 430 (AKLG…TVLS).

Belongs to the NhaA Na(+)/H(+) (TC 2.A.33) antiporter family.

The protein resides in the cell inner membrane. It catalyses the reaction Na(+)(in) + 2 H(+)(out) = Na(+)(out) + 2 H(+)(in). Functionally, na(+)/H(+) antiporter that extrudes sodium in exchange for external protons. The protein is Na(+)/H(+) antiporter NhaA 2 of Syntrophotalea carbinolica (strain DSM 2380 / NBRC 103641 / GraBd1) (Pelobacter carbinolicus).